The sequence spans 459 residues: Bifunctional protein GlmU (459 aa).

The pyrophosphorylase stretch occupies residues Met1–Arg229. UDP-N-acetyl-alpha-D-glucosamine is bound by residues Leu8–Gly11, Lys22, Gln72, and Gly77–Thr78. Asp102 serves as a coordination point for Mg(2+). Gly139, Glu154, Asn169, and Asn227 together coordinate UDP-N-acetyl-alpha-D-glucosamine. Asn227 serves as a coordination point for Mg(2+). Residues Val230–Asn250 are linker. The N-acetyltransferase stretch occupies residues Gly251–Gln459. UDP-N-acetyl-alpha-D-glucosamine contacts are provided by Arg332 and Lys350. His362 serves as the catalytic Proton acceptor. UDP-N-acetyl-alpha-D-glucosamine contacts are provided by Tyr365 and Asn376. Residues Ala379, Asn385–Tyr386, Ser404, Ala422, and Arg439 contribute to the acetyl-CoA site.

It in the N-terminal section; belongs to the N-acetylglucosamine-1-phosphate uridyltransferase family. The protein in the C-terminal section; belongs to the transferase hexapeptide repeat family. As to quaternary structure, homotrimer. Requires Mg(2+) as cofactor.

Its subcellular location is the cytoplasm. It carries out the reaction alpha-D-glucosamine 1-phosphate + acetyl-CoA = N-acetyl-alpha-D-glucosamine 1-phosphate + CoA + H(+). It catalyses the reaction N-acetyl-alpha-D-glucosamine 1-phosphate + UTP + H(+) = UDP-N-acetyl-alpha-D-glucosamine + diphosphate. It participates in nucleotide-sugar biosynthesis; UDP-N-acetyl-alpha-D-glucosamine biosynthesis; N-acetyl-alpha-D-glucosamine 1-phosphate from alpha-D-glucosamine 6-phosphate (route II): step 2/2. It functions in the pathway nucleotide-sugar biosynthesis; UDP-N-acetyl-alpha-D-glucosamine biosynthesis; UDP-N-acetyl-alpha-D-glucosamine from N-acetyl-alpha-D-glucosamine 1-phosphate: step 1/1. The protein operates within bacterial outer membrane biogenesis; LPS lipid A biosynthesis. Its function is as follows. Catalyzes the last two sequential reactions in the de novo biosynthetic pathway for UDP-N-acetylglucosamine (UDP-GlcNAc). The C-terminal domain catalyzes the transfer of acetyl group from acetyl coenzyme A to glucosamine-1-phosphate (GlcN-1-P) to produce N-acetylglucosamine-1-phosphate (GlcNAc-1-P), which is converted into UDP-GlcNAc by the transfer of uridine 5-monophosphate (from uridine 5-triphosphate), a reaction catalyzed by the N-terminal domain. This is Bifunctional protein GlmU from Streptococcus pneumoniae (strain Hungary19A-6).